The sequence spans 202 residues: FMN-dependent NADH:quinone oxidoreductase (202 aa).

Residues serine 9, serine 15–serine 17, methionine 95–phenylalanine 98, and threonine 139–glycine 142 each bind FMN.

This sequence belongs to the azoreductase type 1 family. In terms of assembly, homodimer. FMN serves as cofactor.

It carries out the reaction 2 a quinone + NADH + H(+) = 2 a 1,4-benzosemiquinone + NAD(+). The catalysed reaction is N,N-dimethyl-1,4-phenylenediamine + anthranilate + 2 NAD(+) = 2-(4-dimethylaminophenyl)diazenylbenzoate + 2 NADH + 2 H(+). Its function is as follows. Quinone reductase that provides resistance to thiol-specific stress caused by electrophilic quinones. Functionally, also exhibits azoreductase activity. Catalyzes the reductive cleavage of the azo bond in aromatic azo compounds to the corresponding amines. The chain is FMN-dependent NADH:quinone oxidoreductase from Pseudomonas savastanoi pv. phaseolicola (strain 1448A / Race 6) (Pseudomonas syringae pv. phaseolicola (strain 1448A / Race 6)).